The chain runs to 424 residues: tRNA(Ile)-lysidine synthase (424 aa).

Residue Ser26–Ser31 coordinates ATP.

It belongs to the tRNA(Ile)-lysidine synthase family.

The protein localises to the cytoplasm. It catalyses the reaction cytidine(34) in tRNA(Ile2) + L-lysine + ATP = lysidine(34) in tRNA(Ile2) + AMP + diphosphate + H(+). Ligates lysine onto the cytidine present at position 34 of the AUA codon-specific tRNA(Ile) that contains the anticodon CAU, in an ATP-dependent manner. Cytidine is converted to lysidine, thus changing the amino acid specificity of the tRNA from methionine to isoleucine. This Streptococcus agalactiae serotype V (strain ATCC BAA-611 / 2603 V/R) protein is tRNA(Ile)-lysidine synthase.